The sequence spans 530 residues: Sensor protein kinase PilS (530 aa).

6 consecutive transmembrane segments (helical) span residues 25–37 (LTIG…LISS), 57–70 (WCYL…ALFL), 76–98 (LLPI…YAGG), 101–119 (PSGI…NILL), 124–144 (GLVI…FLSL), and 156–174 (AGGL…QALV). Residues 175–530 (RRQEQTETLA…ITFAHPRKLS (356 aa)) lie on the Cytoplasmic side of the membrane. Residues 196 to 260 (ELNALILQRM…KQWRLNPSLR (65 aa)) enclose the PAS domain. A Histidine kinase domain is found at 316–527 (GIAHEIRNPL…CFRITFAHPR (212 aa)). At His-319 the chain carries Phosphohistidine; by autocatalysis.

As to quaternary structure, interacts with PilA.

It is found in the cell inner membrane. The catalysed reaction is ATP + protein L-histidine = ADP + protein N-phospho-L-histidine.. Member of the two-component regulatory system PilS/PilR that regulates the expression of multiple genes including the type IV pilus (T4P) major subunit PilA. Thereby, plays a major role in the regulation of multiple motility pathways. Functions as a membrane-associated protein kinase that phosphorylates PilR in response to environmental signals leading to activation of specific gene promoters including the pilin gene. The protein is Sensor protein kinase PilS (pilS) of Pseudomonas aeruginosa (strain ATCC 15692 / DSM 22644 / CIP 104116 / JCM 14847 / LMG 12228 / 1C / PRS 101 / PAO1).